The primary structure comprises 419 residues: Multifunctional CCA protein (419 aa).

Positions 8 and 11 each coordinate ATP. Positions 8 and 11 each coordinate CTP. Residues Asp21 and Asp23 each contribute to the Mg(2+) site. Residues Arg91, Arg137, and Arg140 each coordinate ATP. Positions 91, 137, and 140 each coordinate CTP. In terms of domain architecture, HD spans Ser228 to Trp334.

It belongs to the tRNA nucleotidyltransferase/poly(A) polymerase family. Bacterial CCA-adding enzyme type 1 subfamily. Monomer. Can also form homodimers and oligomers. Mg(2+) serves as cofactor. The cofactor is Ni(2+).

It carries out the reaction a tRNA precursor + 2 CTP + ATP = a tRNA with a 3' CCA end + 3 diphosphate. The catalysed reaction is a tRNA with a 3' CCA end + 2 CTP + ATP = a tRNA with a 3' CCACCA end + 3 diphosphate. In terms of biological role, catalyzes the addition and repair of the essential 3'-terminal CCA sequence in tRNAs without using a nucleic acid template. Adds these three nucleotides in the order of C, C, and A to the tRNA nucleotide-73, using CTP and ATP as substrates and producing inorganic pyrophosphate. tRNA 3'-terminal CCA addition is required both for tRNA processing and repair. Also involved in tRNA surveillance by mediating tandem CCA addition to generate a CCACCA at the 3' terminus of unstable tRNAs. While stable tRNAs receive only 3'-terminal CCA, unstable tRNAs are marked with CCACCA and rapidly degraded. The chain is Multifunctional CCA protein from Mannheimia succiniciproducens (strain KCTC 0769BP / MBEL55E).